A 230-amino-acid polypeptide reads, in one-letter code: MADS-box transcription factor 50 (230 aa).

One can recognise an MADS-box domain in the interval 1–61; the sequence is MVRGKTQMKR…GKLYEFASAS (61 aa). Positions 86 to 176 constitute a K-box domain; that stretch reads IEQVKADADG…REKCKNQPPL (91 aa). The disordered stretch occupies residues 209–230; the sequence is GLPGRSRSSGGAAEDSQAMPHS.

Expressed in mature leaves and at low levels in roots and young panicles.

It localises to the nucleus. Probable transcription factor active in flowering time control. May control internode elongation and promote floral transition phase. May act upstream of the floral regulators MADS1, MADS14, MADS15 and MADS18 in the floral induction pathway. The protein is MADS-box transcription factor 50 (MADS50) of Oryza sativa subsp. japonica (Rice).